A 530-amino-acid chain; its full sequence is MKENDMNNGVDKWVNEEDGRNDHHNNNNNLMKKAMMNNEQIDRTQDIDNAKEMLRKISSESSSRRSSLLNKDSSLVNGNANSGGGTSINGTRGSSKSSNTHFQYASTAYGVRMLSKDISNTKVELDVENLMIVTKLNDVSLYFLTRELVEWVLVHFPRVTVYVDSELKNSKKFAAGELCEDSKCRESRIKYWTKDFIREHDVFFDLVVTLGGDGTVLFVSSIFQRHVPPVMSFSLGSLGFLTNFKFEHFREDLPRIMNHKIKTNLRLRLECTIYRRHRPEVDPNTGKKICVVEKLSTHHILNEVTIDRGPSPFLSMLELYGDGSLMTVAQADGLIAATPTGSTAYSLSAGGSLVCPTVNAIALTPICPHALSFRPIILPESINLKVKVSMKSRAPAWAAFDGKDRIELQKGDFITICASPYAFPTVEASPDEFINSISRQLNWNVREQQKSFTHILSQKNQEKYAHEANKVRNQAEPLEVIRDKYSLEADATKENNNGSDDESDDESVNCEACKLKPSSVPKPSQARFSV.

Disordered stretches follow at residues 1 to 27, 57 to 99, and 486 to 530; these read MKEN…HNNN, ISSE…KSSN, and SLEA…RFSV. Basic and acidic residues predominate over residues 13–25; it reads WVNEEDGRNDHHN. The span at 59-75 shows a compositional bias: low complexity; sequence SESSSRRSSLLNKDSSL. The segment covering 88 to 99 has biased composition (polar residues); that stretch reads INGTRGSSKSSN. Ser-499 and Ser-503 each carry phosphoserine. Positions 499-508 are enriched in acidic residues; it reads SDDESDDESV.

Belongs to the NAD kinase family. In terms of assembly, homohexamer.

It carries out the reaction NAD(+) + ATP = ADP + NADP(+) + H(+). In terms of biological role, specifically phosphorylates NAD in the presence of ATP, dATP, or CTP as phosphoryl donors. The chain is NAD(+) kinase (UTR1) from Saccharomyces cerevisiae (strain ATCC 204508 / S288c) (Baker's yeast).